Here is a 434-residue protein sequence, read N- to C-terminus: Histidinol dehydrogenase (434 aa).

The NAD(+) site is built by Tyr-130, Gln-188, and Asn-211. The substrate site is built by Ser-237, Gln-259, and His-262. Positions 259 and 262 each coordinate Zn(2+). Residues Glu-326 and His-327 each act as proton acceptor in the active site. His-327, Asp-360, Glu-414, and His-419 together coordinate substrate. A Zn(2+)-binding site is contributed by Asp-360. His-419 serves as a coordination point for Zn(2+).

It belongs to the histidinol dehydrogenase family. Homodimer. Zn(2+) is required as a cofactor.

It carries out the reaction L-histidinol + 2 NAD(+) + H2O = L-histidine + 2 NADH + 3 H(+). It participates in amino-acid biosynthesis; L-histidine biosynthesis; L-histidine from 5-phospho-alpha-D-ribose 1-diphosphate: step 9/9. Its function is as follows. Catalyzes the sequential NAD-dependent oxidations of L-histidinol to L-histidinaldehyde and then to L-histidine. The chain is Histidinol dehydrogenase from Shigella boydii serotype 4 (strain Sb227).